Consider the following 309-residue polypeptide: tRNA uridine(34) hydroxylase (309 aa).

Positions 137-232 (RGDEVVFFDG…YGEKYGDKGL (96 aa)) constitute a Rhodanese domain. Cys-192 (cysteine persulfide intermediate) is an active-site residue.

The protein belongs to the TrhO family.

The catalysed reaction is uridine(34) in tRNA + AH2 + O2 = 5-hydroxyuridine(34) in tRNA + A + H2O. Catalyzes oxygen-dependent 5-hydroxyuridine (ho5U) modification at position 34 in tRNAs. In Corynebacterium jeikeium (strain K411), this protein is tRNA uridine(34) hydroxylase.